Reading from the N-terminus, the 354-residue chain is Small ribosomal subunit protein uS2 (354 aa).

This sequence belongs to the universal ribosomal protein uS2 family.

This chain is Small ribosomal subunit protein uS2, found in Methylorubrum populi (strain ATCC BAA-705 / NCIMB 13946 / BJ001) (Methylobacterium populi).